Here is a 199-residue protein sequence, read N- to C-terminus: Recombination protein RecR (199 aa).

The C4-type zinc finger occupies 58 to 73; it reads CLVCGNVTGSDICPIC. In terms of domain architecture, Toprim spans 81–176; the sequence is GEICVVTDVA…AVTGLAQGVP (96 aa).

Belongs to the RecR family.

May play a role in DNA repair. It seems to be involved in an RecBC-independent recombinational process of DNA repair. It may act with RecF and RecO. In Paracoccus denitrificans (strain Pd 1222), this protein is Recombination protein RecR.